Reading from the N-terminus, the 169-residue chain is Queuosine precursor transporter QueT (169 aa).

The next 5 membrane-spanning stretches (helical) occupy residues 9-29, 44-64, 73-93, 110-130, and 137-157; these read IVTIAIVAALYVILTMTPGLS, LNFTAFFNKKYIIAVTIGCMI, VDVIVGGLSTLVFLSLGVLLF, FFFFAIFFSISMFTIALELKF, and LLTWGTLALGEFASLFIGAFI.

The protein belongs to the vitamin uptake transporter (VUT/ECF) (TC 2.A.88) family. In E.coli forms a stable energy-coupling factor (ECF) transporter complex composed of 2 membrane-embedded substrate-binding protein (S component), 2 ATP-binding proteins (A and A' components) and 2 transmembrane proteins (T component), probably with a stoichiometry of 2:1:1:2. May be able to interact with more than 1 S component at a time.

The protein localises to the cell membrane. In terms of biological role, probably a queuosine precursor-binding protein that interacts with the energy-coupling factor (ECF) ABC-transporter complex. Unlike classic ABC transporters this ECF transporter provides the energy necessary to transport a number of different substrates. The substrates themselves are bound by transmembrane, not extracytoplasmic soluble proteins. The polypeptide is Queuosine precursor transporter QueT (queT) (Lactococcus lactis subsp. cremoris (strain MG1363)).